A 62-amino-acid chain; its full sequence is MKENILKQKWAKIMKKHKYKKPKWLIKAEQKAEKMTLEEEKEWIEKAIRVYKDKGIDGLFEI.

This is an uncharacterized protein from Methanocaldococcus jannaschii (strain ATCC 43067 / DSM 2661 / JAL-1 / JCM 10045 / NBRC 100440) (Methanococcus jannaschii).